The sequence spans 679 residues: Protein hook (679 aa).

Residues 6–123 (NEMYYSLLEW…RLLQLVLGCA (118 aa)) form the Calponin-homology (CH) domain. 2 coiled-coil regions span residues 135 to 437 (EIMC…LKCG) and 480 to 574 (QTAL…QEIL).

The protein belongs to the hook family. As to quaternary structure, homodimer. Interacts with microtubules via its N-terminus.

Its subcellular location is the cytoplasm. The protein resides in the cytoskeleton. It localises to the endosome. It is found in the synapse. In terms of biological role, involved in endocytic trafficking by stabilizing organelles of the endocytic pathway. Probably acts as a cytoskeletal linker protein required to tether endosome vesicles to the cytoskeleton. Involved in modulation of endocytosis at stages required for down-regulation of membrane proteins that control synapse size. Not involved in synaptic vesicle recycling. Required in R7 cells for boss endocytosis into multivesicular bodies (MVBs). Has a role in regulating adult longevity. The protein is Protein hook of Drosophila yakuba (Fruit fly).